A 39-amino-acid chain; its full sequence is Sarcotoxin-1C (39 aa).

Arg-39 is modified (arginine amide).

The protein belongs to the cecropin family.

The protein resides in the secreted. In terms of biological role, sarcotoxins, which are potent bactericidal proteins, are produced in response to injury. They are cytotoxic to both Gram-positive and Gram-negative bacteria. In Sarcophaga peregrina (Flesh fly), this protein is Sarcotoxin-1C.